Reading from the N-terminus, the 269-residue chain is RBPJ-interacting and tubulin-associated protein 1 (269 aa).

A Nuclear export signal motif is present at residues 5-17 (VELAISGMQTLHV). Disordered stretches follow at residues 67 to 94 (GTGV…TLTP) and 145 to 269 (PATP…PPWK). The span at 79–93 (SCESTSSSGSTPTLT) shows a compositional bias: low complexity. The Nuclear localization signal motif lies at 92 to 108 (LTPRKKNKYRLISHTPS). The interaction with RBPJ/RBPSUH stretch occupies residues 128 to 156 (WMARGDAAKLHALFWTPPATPRGSHSPRP). Positions 156-269 (PRETPVRCVH…ATQKTKPPWK (114 aa)) are interaction with tubulin. Composition is skewed to polar residues over residues 202–220 (LTHP…SPCT) and 247–269 (VSVS…PPWK).

This sequence belongs to the RITA family. In terms of assembly, interacts with RBPJ/RBPSUH.

The protein resides in the cytoplasm. It is found in the nucleus. The protein localises to the cytoskeleton. Its subcellular location is the microtubule organizing center. It localises to the centrosome. Tubulin-binding protein that acts as a negative regulator of Notch signaling pathway. Shuttles between the cytoplasm and the nucleus and mediates the nuclear export of RBPJ/RBPSUH, thereby preventing the interaction between RBPJ/RBPSUH and NICD product of Notch proteins (Notch intracellular domain), leading to down-regulate Notch-mediated transcription. May play a role in neurogenesis. The polypeptide is RBPJ-interacting and tubulin-associated protein 1 (RITA1) (Bos taurus (Bovine)).